Consider the following 312-residue polypeptide: Ribonuclease HIII (312 aa).

One can recognise an RNase H type-2 domain in the interval 95-311; it reads FNCIGSDEAG…REKAQKILKP (217 aa). The a divalent metal cation site is built by aspartate 101, glutamate 102, and aspartate 206.

Belongs to the RNase HII family. RnhC subfamily. Requires Mn(2+) as cofactor. Mg(2+) is required as a cofactor.

Its subcellular location is the cytoplasm. The catalysed reaction is Endonucleolytic cleavage to 5'-phosphomonoester.. In terms of biological role, endonuclease that specifically degrades the RNA of RNA-DNA hybrids. This chain is Ribonuclease HIII, found in Staphylococcus aureus (strain Mu3 / ATCC 700698).